The sequence spans 464 residues: V-type ATP synthase beta chain (464 aa).

It belongs to the ATPase alpha/beta chains family.

Functionally, produces ATP from ADP in the presence of a proton gradient across the membrane. The V-type beta chain is a regulatory subunit. The sequence is that of V-type ATP synthase beta chain from Streptococcus gordonii (strain Challis / ATCC 35105 / BCRC 15272 / CH1 / DL1 / V288).